Consider the following 407-residue polypeptide: Tyrosine--tRNA ligase 1 (407 aa).

Residue Tyr-35 coordinates L-tyrosine. The 'HIGH' region motif lies at 40–49 (PTGDSLHVGH). Tyr-168 and Gln-172 together coordinate L-tyrosine. The short motif at 228–232 (KMGKT) is the 'KMSKS' region element. Lys-231 lines the ATP pocket. The 67-residue stretch at 340–406 (SSILDVLVHT…GKKKYYKIVI (67 aa)) folds into the S4 RNA-binding domain.

The protein belongs to the class-I aminoacyl-tRNA synthetase family. TyrS type 1 subfamily. In terms of assembly, homodimer.

It localises to the cytoplasm. The enzyme catalyses tRNA(Tyr) + L-tyrosine + ATP = L-tyrosyl-tRNA(Tyr) + AMP + diphosphate + H(+). Its function is as follows. Catalyzes the attachment of tyrosine to tRNA(Tyr) in a two-step reaction: tyrosine is first activated by ATP to form Tyr-AMP and then transferred to the acceptor end of tRNA(Tyr). The chain is Tyrosine--tRNA ligase 1 from Clostridium acetobutylicum (strain ATCC 824 / DSM 792 / JCM 1419 / IAM 19013 / LMG 5710 / NBRC 13948 / NRRL B-527 / VKM B-1787 / 2291 / W).